A 213-amino-acid chain; its full sequence is Ras-related protein Rab-39B (213 aa).

GTP contacts are provided by S17, G20, K21, S22, C23, S37, and T40. A Mg(2+)-binding site is contributed by S22. A switch-I region spans residues 35-43 (QVSDPTVGV). Residues T40 and D64 each coordinate Mg(2+). GTP contacts are provided by G67, H123, K124, D126, A154, and R155. The segment at 67–83 (GQERFRSITRAYYRNSV) is switch-II. Phosphoserine is present on S201. 2 S-geranylgeranyl cysteine lipidation sites follow: C211 and C213. At C213 the chain carries Cysteine methyl ester.

This sequence belongs to the small GTPase superfamily. Rab family. As to quaternary structure, interacts (GDP-bound) with C9orf72; C9orf72 in complex with SMCR8 acts as a GEF for RAB39B. Interacts (in GTP-bound form) with PICK1 (via PDZ domain); a PICK1 homodimer may allow simultaneous association of RAB39B and GRIA2 to PICK1 which is involved in GRIA2 trafficking. Interacts with isoform c of RASSF1; the interaction is strong. Interacts with isoform a of RASSF1; the interaction is weak. Interacts with the DLG4/PSD-95. Interacts (GTP-bound) with HOPS complex components VPS39 and VPS41. Mg(2+) serves as cofactor. Specifically expressed in neuron and neuronal precursors in the brain. Expression is high in all regions of the brain with highest levels observed in the hippocampus.

The protein localises to the cell membrane. It is found in the cytoplasmic vesicle membrane. It localises to the golgi apparatus. The protein resides in the cytoplasmic vesicle. Its subcellular location is the autophagosome membrane. The protein localises to the autolysosome membrane. The catalysed reaction is GTP + H2O = GDP + phosphate + H(+). With respect to regulation, regulated by guanine nucleotide exchange factors (GEFs) including C9orf72-SMCR8 complex, which promote the exchange of bound GDP for free GTP. Regulated by GTPase activating proteins (GAPs) which increase the GTP hydrolysis activity. Inhibited by GDP dissociation inhibitors (GDIs). Its function is as follows. The small GTPases Rab are key regulators of intracellular membrane trafficking, from the formation of transport vesicles to their fusion with membranes. Rabs cycle between an inactive GDP-bound form and an active GTP-bound form that is able to recruit to membranes different sets of downstream effectors directly responsible for vesicle formation, movement, tethering and fusion. RAB39B is involved in autophagy and may function in autophagosome formation. Binds downstream effector PICK1 to ensure selectively GRIA2 exit from the endoplasmic reticulum to the Golgi and to regulate AMPAR composition at the post-synapses and thus synaptic transmission. May regulate the homeostasis of SNCA/alpha-synuclein. This is Ras-related protein Rab-39B from Mus musculus (Mouse).